We begin with the raw amino-acid sequence, 304 residues long: L-threonate dehydrogenase (304 aa).

Residues 7–35 (YAVA…TYGV) and Thr-102 each bind NAD(+). Residue Lys-178 is part of the active site. NAD(+) is bound at residue Lys-246.

It belongs to the HIBADH-related family. L-threonate dehydrogenase subfamily.

The catalysed reaction is L-threonate + NAD(+) = 2-dehydro-L-erythronate + NADH + H(+). Functionally, catalyzes oxidation of L-threonate to 2-oxo-tetronate. Can use either NAD(+) or NADP(+) as cosubstrate, with a preference for NAD(+). This is L-threonate dehydrogenase from Pectobacterium atrosepticum (strain SCRI 1043 / ATCC BAA-672) (Erwinia carotovora subsp. atroseptica).